The sequence spans 176 residues: Disulfide bond formation protein B (176 aa).

At 1-14 the chain is on the cytoplasmic side; sequence MMRSLNRCSKHRAA. Residues 15–31 form a helical membrane-spanning segment; sequence WLLLALTTFSLELVALY. Topologically, residues 32-49 are periplasmic; that stretch reads FQHVMLLKPCVLCVYQRC. A disulfide bond links Cys41 and Cys44. A helical transmembrane segment spans residues 50–65; the sequence is ALYGVVAAGLVGAIAP. The Cytoplasmic segment spans residues 66–71; it reads ATPLRF. The chain crosses the membrane as a helical span at residues 72 to 89; that stretch reads SGLAIWLYSAWEGLQLAM. Residues 90–144 are Periplasmic-facing; that stretch reads KHTDIQLHPSPFVTCDFFVSFPAWLPLDKWLPSVFSASGDCAVRQWHFLSLEMPQ. A disulfide bond links Cys104 and Cys130. The chain crosses the membrane as a helical span at residues 145–163; the sequence is WMIVIFGAYLAVAVLILLA. Over 164-176 the chain is Cytoplasmic; the sequence is QFFPPRKRDLFSR.

This sequence belongs to the DsbB family.

The protein localises to the cell inner membrane. In terms of biological role, required for disulfide bond formation in some periplasmic proteins. Acts by oxidizing the DsbA protein. This Sodalis glossinidius (strain morsitans) protein is Disulfide bond formation protein B.